Here is a 284-residue protein sequence, read N- to C-terminus: Ribosomal RNA small subunit methyltransferase A (284 aa).

Asparagine 26, leucine 28, glycine 53, glutamate 74, aspartate 97, and asparagine 127 together coordinate S-adenosyl-L-methionine.

Belongs to the class I-like SAM-binding methyltransferase superfamily. rRNA adenine N(6)-methyltransferase family. RsmA subfamily.

It is found in the cytoplasm. It catalyses the reaction adenosine(1518)/adenosine(1519) in 16S rRNA + 4 S-adenosyl-L-methionine = N(6)-dimethyladenosine(1518)/N(6)-dimethyladenosine(1519) in 16S rRNA + 4 S-adenosyl-L-homocysteine + 4 H(+). In terms of biological role, specifically dimethylates two adjacent adenosines (A1518 and A1519) in the loop of a conserved hairpin near the 3'-end of 16S rRNA in the 30S particle. May play a critical role in biogenesis of 30S subunits. The chain is Ribosomal RNA small subunit methyltransferase A from Anaeromyxobacter dehalogenans (strain 2CP-1 / ATCC BAA-258).